A 348-amino-acid polypeptide reads, in one-letter code: DnaJ homolog subfamily B member 5 (348 aa).

A J domain is found at 4–68 (DYYKILGIPS…KKRGLYDQYG (65 aa)).

The sequence is that of DnaJ homolog subfamily B member 5 (DNAJB5) from Homo sapiens (Human).